The chain runs to 239 residues: Protein TrbH (239 aa).

The chain crosses the membrane as a helical span at residues 208 to 228 (TVVSIICLLMWICLVYIHCGI).

It localises to the cell inner membrane. This is Protein TrbH (trbH) from Escherichia coli (strain K12).